The chain runs to 142 residues: Complexin (142 aa).

2 disordered regions span residues 13–70 (QLSA…MRQD) and 83–105 (IVEA…PEEL). The stretch at 29–138 (GDDKEKAEEE…NELKTQIEGK (110 aa)) forms a coiled coil. Basic and acidic residues predominate over residues 31 to 70 (DKEKAEEEERERQEAIKEAEDRRKEKHRKMEEEREKMRQD). The residue at position 139 (cysteine 139) is a Cysteine methyl ester. Cysteine 139 carries S-farnesyl cysteine lipidation. The propeptide at 140 to 142 (VMQ) is removed in mature form.

This sequence belongs to the complexin/synaphin family. In terms of assembly, binds to the SNARE core complex containing Snap25, synaptobrevin and Syx1A.

The protein resides in the membrane. Positively regulates a late step in synaptic vesicle exocytosis. The polypeptide is Complexin (cpx) (Drosophila melanogaster (Fruit fly)).